The chain runs to 201 residues: Ras-related protein Rab-1B (201 aa).

Met1 is subject to N-acetylmethionine. GTP is bound by residues Ser17, Gly18, Val19, Gly20, Lys21, Ser22, Cys23, Tyr33, Thr34, Glu35, Ser36, Ser39, and Thr40. Ser22 is a binding site for Mg(2+). A Switch 1 motif is present at residues 30 to 45 (DDTYTESYISTIGVDF). Residues Thr40 and Asp63 each coordinate Mg(2+). The segment at 64–83 (TAGQERFRTVTSSYYRGAHG) is switch 2 region; required for interaction with REP1/CHM. The Switch 2 motif lies at 65–80 (AGQERFRTVTSSYYRG). GTP-binding residues include Gly66, Asn121, Lys122, Asp124, Ser151, Ala152, and Lys153. The interval 173 to 201 (MGPGAASGGERPNLKIDSTPVKSASGGCC) is disordered. Residues Cys200 and Cys201 are each lipidated (S-geranylgeranyl cysteine). Position 201 is a cysteine methyl ester (Cys201).

This sequence belongs to the small GTPase superfamily. Rab family. Interacts with MICAL1 and MICAL2. Interacts (in GTP-bound form) with MICALCL, MICAL1 and MILCAL3. Interacts with GDI1; the interaction requires the GDP-bound state. Interacts with CHM/REP1; the interaction requires the GDP-bound form and is necessary for prenylation by GGTase II. Interacts with RabGAP TBC1D20. Interacts (in GDP-bound form) with lipid phosphatase MTMR6 (via GRAM domain); the interaction regulates MTMR6 recruitment to the endoplasmic reticulum-Golgi intermediate compartment. Interacts (in GDP-bound form) with lipid phosphatase MTMR7. Mg(2+) is required as a cofactor. Prenylated; by GGTase II, only after interaction of the substrate with Rab escort protein 1 (REP1).

The protein localises to the cytoplasm. It localises to the membrane. Its subcellular location is the preautophagosomal structure membrane. The protein resides in the perinuclear region. The catalysed reaction is GTP + H2O = GDP + phosphate + H(+). Regulated by guanine nucleotide exchange factors (GEFs) which promote the exchange of bound GDP for free GTP. Regulated by GTPase activating proteins (GAPs) including TBC1D20 which increases the GTP hydrolysis activity. Inhibited by GDP dissociation inhibitors (GDIs). Its function is as follows. The small GTPases Rab are key regulators of intracellular membrane trafficking, from the formation of transport vesicles to their fusion with membranes. Rabs cycle between an inactive GDP-bound form and an active GTP-bound form that is able to recruit to membranes different set of downstream effectors directly responsible for vesicle formation, movement, tethering and fusion. Plays a role in the initial events of the autophagic vacuole development which take place at specialized regions of the endoplasmic reticulum. Regulates vesicular transport between the endoplasmic reticulum and successive Golgi compartments. Required to modulate the compacted morphology of the Golgi. Promotes the recruitment of lipid phosphatase MTMR6 to the endoplasmic reticulum-Golgi intermediate compartment. This Rattus norvegicus (Rat) protein is Ras-related protein Rab-1B (Rab1b).